Here is a 338-residue protein sequence, read N- to C-terminus: Flap endonuclease 1 (338 aa).

The interval 1–98 is N-domain; it reads MGVNLSSILI…ETLRERSLIK (98 aa). Residues Asp27, Asp80, Glu152, Glu154, Asp173, Asp175, and Asp236 each coordinate Mg(2+). The segment at 116 to 257 is I-domain; it reads KIRSLSSRIN…TALSLIKKYN (142 aa). Residues 330–338 are interaction with PCNA; it reads HQSSLDRFF.

Belongs to the XPG/RAD2 endonuclease family. FEN1 subfamily. In terms of assembly, interacts with PCNA. PCNA stimulates the nuclease activity without altering cleavage specificity. Requires Mg(2+) as cofactor.

Structure-specific nuclease with 5'-flap endonuclease and 5'-3' exonuclease activities involved in DNA replication and repair. During DNA replication, cleaves the 5'-overhanging flap structure that is generated by displacement synthesis when DNA polymerase encounters the 5'-end of a downstream Okazaki fragment. Binds the unpaired 3'-DNA end and kinks the DNA to facilitate 5' cleavage specificity. Cleaves one nucleotide into the double-stranded DNA from the junction in flap DNA, leaving a nick for ligation. Also involved in the base excision repair (BER) pathway. Acts as a genome stabilization factor that prevents flaps from equilibrating into structures that lead to duplications and deletions. Also possesses 5'-3' exonuclease activity on nicked or gapped double-stranded DNA. In Picrophilus torridus (strain ATCC 700027 / DSM 9790 / JCM 10055 / NBRC 100828 / KAW 2/3), this protein is Flap endonuclease 1.